The sequence spans 208 residues: Small ribosomal subunit protein uS4 (208 aa).

A disordered region spans residues 31–51 (SALDKRAYGPGQHGQRRAKTS). In terms of domain architecture, S4 RNA-binding spans 98 to 160 (RRLDNVVYRM…TKSNSQVVRA (63 aa)).

Belongs to the universal ribosomal protein uS4 family. In terms of assembly, part of the 30S ribosomal subunit. Contacts protein S5. The interaction surface between S4 and S5 is involved in control of translational fidelity.

Functionally, one of the primary rRNA binding proteins, it binds directly to 16S rRNA where it nucleates assembly of the body of the 30S subunit. With S5 and S12 plays an important role in translational accuracy. The sequence is that of Small ribosomal subunit protein uS4 from Helicobacter pylori (strain ATCC 700392 / 26695) (Campylobacter pylori).